Consider the following 93-residue polypeptide: Red pigment-concentrating hormone (93 aa).

The first 21 residues, M1–A21, serve as a signal peptide directing secretion. At Q22 the chain carries Pyrrolidone carboxylic acid. At W29 the chain carries Tryptophan amide. A propeptide spanning residues A33–G93 is cleaved from the precursor. Residues A34–L56 are disordered.

This sequence belongs to the AKH/HRTH/RPCH family. In terms of tissue distribution, strongly expressed in the eyestalk and weakly in brain. Not expressed in other tissues tested.

The protein resides in the secreted. Its function is as follows. This hormone adapts the animal to light backgrounds by stimulating concentration of the pigment of its red body-chromatophores. This Penaeus monodon (Giant tiger prawn) protein is Red pigment-concentrating hormone.